Here is a 20-residue protein sequence, read N- to C-terminus: Citrate synthase (20 aa).

It belongs to the citrate synthase family. Homodimer.

The enzyme catalyses oxaloacetate + acetyl-CoA + H2O = citrate + CoA + H(+). It participates in carbohydrate metabolism; tricarboxylic acid cycle; isocitrate from oxaloacetate: step 1/2. The chain is Citrate synthase from Populus euphratica (Euphrates poplar).